A 365-amino-acid polypeptide reads, in one-letter code: Cobalt-precorrin-5B C(1)-methyltransferase (365 aa).

Belongs to the CbiD family.

The catalysed reaction is Co-precorrin-5B + S-adenosyl-L-methionine = Co-precorrin-6A + S-adenosyl-L-homocysteine. It functions in the pathway cofactor biosynthesis; adenosylcobalamin biosynthesis; cob(II)yrinate a,c-diamide from sirohydrochlorin (anaerobic route): step 6/10. In terms of biological role, catalyzes the methylation of C-1 in cobalt-precorrin-5B to form cobalt-precorrin-6A. This is Cobalt-precorrin-5B C(1)-methyltransferase from Methanococcus maripaludis (strain C5 / ATCC BAA-1333).